A 159-amino-acid chain; its full sequence is uncharacterized protein (159 aa).

2 helical membrane passes run 17–37 (ALFISAVLGLFCGLSFFTILV) and 40–60 (LLQFVFFFVIGLLIEYIFKKY).

It is found in the cell membrane. This is an uncharacterized protein from Borreliella burgdorferi (strain ATCC 35210 / DSM 4680 / CIP 102532 / B31) (Borrelia burgdorferi).